The following is a 324-amino-acid chain: Taste receptor type 2 member 116 (324 aa).

The Extracellular segment spans residues 1-2 (MN). The chain crosses the membrane as a helical span at residues 3–23 (GVLYITFTVILSVEVIIGNFG). Over 24–55 (NGIIALVNIMDLAKRRKISSVDQILTALAISR) the chain is Cytoplasmic. Residues 56-76 (IVLLWLVLVSWWLSMFYPGQW) form a helical membrane-spanning segment. Topologically, residues 77–94 (MTEGIDVIVHNVWTTLNQ) are extracellular. Residues 95–115 (ISLWLATSFSVFCFLKVANFS) form a helical membrane-spanning segment. Topologically, residues 116–128 (NTIFFYLKIRVKK) are cytoplasmic. A helical membrane pass occupies residues 129 to 149 (VMTGTLIMFLLLLGLNIIVIN). Over 150–183 (ASKTILIPEYKVNMSNSLNLKNTQISMLFPFANT) the chain is Extracellular. Asn-162 carries N-linked (GlcNAc...) asparagine glycosylation. Residues 184–204 (LFGFIPFAVSLVTFLLLFFSL) form a helical membrane-spanning segment. Residues 205–236 (WKHQRKMHHGAQGCRDSSTKAHIRVLQTLIAS) lie on the Cytoplasmic side of the membrane. The chain crosses the membrane as a helical span at residues 237 to 257 (ILLYFVFFLSLVVKVWISLFL). At 258 to 261 (ERML) the chain is on the extracellular side. A helical transmembrane segment spans residues 262–282 (LLLITQAAKIAFPSLHPWVLI). Topologically, residues 283–324 (LGNAKLRKASLSALQWLRCRHKDEHRRVQRPEVHSCGSSCMP) are cytoplasmic.

Belongs to the G-protein coupled receptor T2R family.

Its subcellular location is the membrane. Putative taste receptor which may play a role in the perception of bitterness. This is Taste receptor type 2 member 116 from Rattus norvegicus (Rat).